Consider the following 280-residue polypeptide: Acetyl-coenzyme A carboxylase carboxyl transferase subunit beta (280 aa).

The 253-residue stretch at 28 to 280 (IMTKCPSCRT…TLTKLLAMHQ (253 aa)) folds into the CoA carboxyltransferase N-terminal domain. Positions 32, 35, 51, and 54 each coordinate Zn(2+). The C4-type zinc-finger motif lies at 32-54 (CPSCRTIMYTKDLKKNLSVCRTC).

Belongs to the AccD/PCCB family. In terms of assembly, acetyl-CoA carboxylase is a heterohexamer composed of biotin carboxyl carrier protein (AccB), biotin carboxylase (AccC) and two subunits each of ACCase subunit alpha (AccA) and ACCase subunit beta (AccD). Zn(2+) is required as a cofactor.

The protein resides in the cytoplasm. The enzyme catalyses N(6)-carboxybiotinyl-L-lysyl-[protein] + acetyl-CoA = N(6)-biotinyl-L-lysyl-[protein] + malonyl-CoA. It participates in lipid metabolism; malonyl-CoA biosynthesis; malonyl-CoA from acetyl-CoA: step 1/1. Component of the acetyl coenzyme A carboxylase (ACC) complex. Biotin carboxylase (BC) catalyzes the carboxylation of biotin on its carrier protein (BCCP) and then the CO(2) group is transferred by the transcarboxylase to acetyl-CoA to form malonyl-CoA. This is Acetyl-coenzyme A carboxylase carboxyl transferase subunit beta from Shouchella clausii (strain KSM-K16) (Alkalihalobacillus clausii).